A 285-amino-acid chain; its full sequence is 2-dehydro-3-deoxyphosphooctonate aldolase (285 aa).

The protein belongs to the KdsA family.

It localises to the cytoplasm. It carries out the reaction D-arabinose 5-phosphate + phosphoenolpyruvate + H2O = 3-deoxy-alpha-D-manno-2-octulosonate-8-phosphate + phosphate. The protein operates within carbohydrate biosynthesis; 3-deoxy-D-manno-octulosonate biosynthesis; 3-deoxy-D-manno-octulosonate from D-ribulose 5-phosphate: step 2/3. Its pathway is bacterial outer membrane biogenesis; lipopolysaccharide biosynthesis. This Acinetobacter baylyi (strain ATCC 33305 / BD413 / ADP1) protein is 2-dehydro-3-deoxyphosphooctonate aldolase.